The sequence spans 333 residues: Serine/threonine-protein phosphatase 4 catalytic subunit 1 (333 aa).

The disordered stretch occupies residues Met-1 to Thr-28. Residues Asp-7–Leu-27 show a composition bias toward polar residues. Mn(2+) contacts are provided by Asp-79, His-81, Asp-107, and Asn-139. The active-site Proton donor is the His-140. Mn(2+) is bound by residues His-189 and His-264. Leu-333 carries the post-translational modification Leucine methyl ester.

The protein belongs to the PPP phosphatase family. PP-4 (PP-X) subfamily. Serine/threonine-protein phosphatase 4 (PP4) occurs in different assemblies of the catalytic and one or more regulatory subunits. The regulatory subunits are likely to be ppfr-1, ppfr-2, ppfr-4 and smk-1. Interacts with mei-1. It depends on Mn(2+) as a cofactor. Methylation at the C-terminal Leu-333 is critical for interactions with regulatory subunits.

It localises to the cytoplasm. The protein resides in the cytoskeleton. It is found in the microtubule organizing center. Its subcellular location is the centrosome. The enzyme catalyses O-phospho-L-seryl-[protein] + H2O = L-seryl-[protein] + phosphate. It carries out the reaction O-phospho-L-threonyl-[protein] + H2O = L-threonyl-[protein] + phosphate. Protein phosphatase which plays an essential role in meiosis and in early embryonic mitosis. During spermatocyte meiosis and the first embryonic mitosis, regulates centrosome maturation, and thus spindle formation, by recruiting some of the components of the pericentriolar material (PCM). During oocyte meiosis I, regulates meiotic chromosome dynamics including synapsis-independent chromosome pairing, restriction of synapsis to homologous chromosomes, programmed DNA double-strand break initiation and crossover formation resulting in chiasma formation. During oocyte meiosis II and probably together with regulatory subunit ppfr-1, may regulate microtubule severing by dephosphorylating and activating mei-1, a component of the katanin microtubule severing complex. This is Serine/threonine-protein phosphatase 4 catalytic subunit 1 from Caenorhabditis elegans.